A 244-amino-acid polypeptide reads, in one-letter code: Small ribosomal subunit protein eS4 (244 aa).

In terms of domain architecture, S4 RNA-binding spans 37–123; sequence VPLAILLKYY…AKYKFVRIMN (87 aa).

The protein belongs to the eukaryotic ribosomal protein eS4 family.

This Sulfolobus acidocaldarius (strain ATCC 33909 / DSM 639 / JCM 8929 / NBRC 15157 / NCIMB 11770) protein is Small ribosomal subunit protein eS4 (rps4e).